Consider the following 182-residue polypeptide: Endoribonuclease YbeY (182 aa).

Zn(2+) contacts are provided by histidine 120, histidine 124, and histidine 130. The interval 157-182 (RGVSFAPKPTGAGAFPSAADRDDTQN) is disordered.

It belongs to the endoribonuclease YbeY family. Zn(2+) is required as a cofactor.

The protein localises to the cytoplasm. In terms of biological role, single strand-specific metallo-endoribonuclease involved in late-stage 70S ribosome quality control and in maturation of the 3' terminus of the 16S rRNA. In Corynebacterium jeikeium (strain K411), this protein is Endoribonuclease YbeY.